The primary structure comprises 201 residues: Aminoglycoside N(6')-acetyltransferase type 1 (201 aa).

The N-acetyltransferase domain maps to 25–192 (VTLRLMTEHD…PAVYMVQTRQ (168 aa)). Substrate contacts are provided by tryptophan 51 and aspartate 154. Asparagine 159 is a binding site for acetyl-CoA.

In terms of assembly, homodimer.

It carries out the reaction kanamycin B + acetyl-CoA = N(6')-acetylkanamycin B + CoA + H(+). Functionally, catalyzes the transfer of an acetyl group from acetyl-CoA to the 6'-amino group of aminoglycoside molecules conferring resistance to antibiotics containing the purpurosamine ring including amikacin. This is Aminoglycoside N(6')-acetyltransferase type 1 (aacA4) from Klebsiella pneumoniae.